The following is a 308-amino-acid chain: Ribosomal RNA small subunit methyltransferase H (308 aa).

S-adenosyl-L-methionine contacts are provided by residues 32–34 (GGH), Asp52, Phe78, Asp100, and Gln107.

This sequence belongs to the methyltransferase superfamily. RsmH family.

It is found in the cytoplasm. It catalyses the reaction cytidine(1402) in 16S rRNA + S-adenosyl-L-methionine = N(4)-methylcytidine(1402) in 16S rRNA + S-adenosyl-L-homocysteine + H(+). Functionally, specifically methylates the N4 position of cytidine in position 1402 (C1402) of 16S rRNA. The sequence is that of Ribosomal RNA small subunit methyltransferase H from Legionella pneumophila (strain Paris).